Consider the following 584-residue polypeptide: Proteasome-associated ATPase (584 aa).

Residues 16–91 (EELASQVRLL…KEEVDRLAQP (76 aa)) adopt a coiled-coil conformation. ATP is bound at residue 273 to 278 (GCGKTL). Residues 583 to 584 (YL) are docks into pockets in the proteasome alpha-ring.

Belongs to the AAA ATPase family. As to quaternary structure, homohexamer. Assembles into a hexameric ring structure that caps the 20S proteasome core. Strongly interacts with the prokaryotic ubiquitin-like protein Pup through a hydrophobic interface; the interacting region of ARC lies in its N-terminal coiled-coil domain. There is one Pup binding site per ARC hexamer ring. Upon ATP-binding, the C-terminus of ARC interacts with the alpha-rings of the proteasome core, possibly by binding to the intersubunit pockets.

The protein operates within protein degradation; proteasomal Pup-dependent pathway. Functionally, ATPase which is responsible for recognizing, binding, unfolding and translocation of pupylated proteins into the bacterial 20S proteasome core particle. May be essential for opening the gate of the 20S proteasome via an interaction with its C-terminus, thereby allowing substrate entry and access to the site of proteolysis. Thus, the C-termini of the proteasomal ATPase may function like a 'key in a lock' to induce gate opening and therefore regulate proteolysis. The protein is Proteasome-associated ATPase of Nocardioides sp. (strain ATCC BAA-499 / JS614).